Reading from the N-terminus, the 403-residue chain is F-box/LRR-repeat protein At1g06630 (403 aa).

The F-box domain maps to Arg-11–Ser-59. LRR repeat units lie at residues Leu-239 to Ser-262 and Ile-288 to Leu-312.

The protein is F-box/LRR-repeat protein At1g06630 of Arabidopsis thaliana (Mouse-ear cress).